A 207-amino-acid chain; its full sequence is Holliday junction branch migration complex subunit RuvA (207 aa).

The segment at 1-64 (MIGRLRGNLL…EDAQLLYGFN (64 aa)) is domain I. The interval 65-143 (TKNERALFRE…GWGAGDLFTP (79 aa)) is domain II. The interval 144–158 (ATDAAPMDDGSEFIT) is flexible linker. The tract at residues 159-207 (SPQSAVDEAVSALIALGYKPQQASKTVSQVAKPDMTSEVLIRESLKSMI) is domain III.

It belongs to the RuvA family. Homotetramer. Forms an RuvA(8)-RuvB(12)-Holliday junction (HJ) complex. HJ DNA is sandwiched between 2 RuvA tetramers; dsDNA enters through RuvA and exits via RuvB. An RuvB hexamer assembles on each DNA strand where it exits the tetramer. Each RuvB hexamer is contacted by two RuvA subunits (via domain III) on 2 adjacent RuvB subunits; this complex drives branch migration. In the full resolvosome a probable DNA-RuvA(4)-RuvB(12)-RuvC(2) complex forms which resolves the HJ.

The protein resides in the cytoplasm. In terms of biological role, the RuvA-RuvB-RuvC complex processes Holliday junction (HJ) DNA during genetic recombination and DNA repair, while the RuvA-RuvB complex plays an important role in the rescue of blocked DNA replication forks via replication fork reversal (RFR). RuvA specifically binds to HJ cruciform DNA, conferring on it an open structure. The RuvB hexamer acts as an ATP-dependent pump, pulling dsDNA into and through the RuvAB complex. HJ branch migration allows RuvC to scan DNA until it finds its consensus sequence, where it cleaves and resolves the cruciform DNA. In Aliivibrio fischeri (strain MJ11) (Vibrio fischeri), this protein is Holliday junction branch migration complex subunit RuvA.